Reading from the N-terminus, the 61-residue chain is Large ribosomal subunit protein uL30 (61 aa).

The protein belongs to the universal ribosomal protein uL30 family. As to quaternary structure, part of the 50S ribosomal subunit.

The chain is Large ribosomal subunit protein uL30 from Corynebacterium glutamicum (strain R).